The sequence spans 96 residues: Aspartyl/glutamyl-tRNA(Asn/Gln) amidotransferase subunit C (96 aa).

A disordered region spans residues 64–96 (REDEPEPGLPREEVLKNAPDQQDGQFRVPAILE).

Belongs to the GatC family. Heterotrimer of A, B and C subunits.

It catalyses the reaction L-glutamyl-tRNA(Gln) + L-glutamine + ATP + H2O = L-glutaminyl-tRNA(Gln) + L-glutamate + ADP + phosphate + H(+). It carries out the reaction L-aspartyl-tRNA(Asn) + L-glutamine + ATP + H2O = L-asparaginyl-tRNA(Asn) + L-glutamate + ADP + phosphate + 2 H(+). Its function is as follows. Allows the formation of correctly charged Asn-tRNA(Asn) or Gln-tRNA(Gln) through the transamidation of misacylated Asp-tRNA(Asn) or Glu-tRNA(Gln) in organisms which lack either or both of asparaginyl-tRNA or glutaminyl-tRNA synthetases. The reaction takes place in the presence of glutamine and ATP through an activated phospho-Asp-tRNA(Asn) or phospho-Glu-tRNA(Gln). The chain is Aspartyl/glutamyl-tRNA(Asn/Gln) amidotransferase subunit C from Geobacillus thermodenitrificans (strain NG80-2).